The primary structure comprises 123 residues: Small ribosomal subunit protein uS12 (123 aa).

Aspartate 89 carries the post-translational modification 3-methylthioaspartic acid. The interval 104–123 (TAGVQDRRQGRSKYGAKRPK) is disordered. The span at 113 to 123 (GRSKYGAKRPK) shows a compositional bias: basic residues.

The protein belongs to the universal ribosomal protein uS12 family. Part of the 30S ribosomal subunit. Contacts proteins S8 and S17. May interact with IF1 in the 30S initiation complex.

Its function is as follows. With S4 and S5 plays an important role in translational accuracy. Functionally, interacts with and stabilizes bases of the 16S rRNA that are involved in tRNA selection in the A site and with the mRNA backbone. Located at the interface of the 30S and 50S subunits, it traverses the body of the 30S subunit contacting proteins on the other side and probably holding the rRNA structure together. The combined cluster of proteins S8, S12 and S17 appears to hold together the shoulder and platform of the 30S subunit. The chain is Small ribosomal subunit protein uS12 from Oleidesulfovibrio alaskensis (strain ATCC BAA-1058 / DSM 17464 / G20) (Desulfovibrio alaskensis).